A 147-amino-acid chain; its full sequence is Ubiquitin-conjugating enzyme E2 D1 (147 aa).

Residues Met-1–Met-147 enclose the UBC core domain. Cys-85 functions as the Glycyl thioester intermediate in the catalytic mechanism.

This sequence belongs to the ubiquitin-conjugating enzyme family. As to quaternary structure, component of a E3 ubiquitin ligase complex containing UBE2D1, SIAH1, CACYBP/SIP, SKP1, APC and TBL1X. Interacts with RNF11. Post-translationally, autoubiquitinated.

Its subcellular location is the cytoplasm. The catalysed reaction is S-ubiquitinyl-[E1 ubiquitin-activating enzyme]-L-cysteine + [E2 ubiquitin-conjugating enzyme]-L-cysteine = [E1 ubiquitin-activating enzyme]-L-cysteine + S-ubiquitinyl-[E2 ubiquitin-conjugating enzyme]-L-cysteine.. The enzyme catalyses S-ubiquitinyl-[E1 ubiquitin-activating enzyme]-L-cysteine + [acceptor protein]-L-lysine = [E1 ubiquitin-activating enzyme]-L-cysteine + N(6)-monoubiquitinyl-[acceptor protein]-L-lysine.. Its pathway is protein modification; protein ubiquitination. Accepts ubiquitin from the E1 complex and catalyzes its covalent attachment to other proteins. In vitro catalyzes 'Lys-48'-linked polyubiquitination. Mediates the selective degradation of short-lived and abnormal proteins. Functions in the E6/E6-AP-induced ubiquitination of p53/TP53. Mediates ubiquitination of PEX5 and auto-ubiquitination of STUB1, TRAF6 and TRIM63/MURF1. Ubiquitinates STUB1-associated HSP90AB1 in vitro. Lacks inherent specificity for any particular lysine residue of ubiquitin. Essential for viral activation of IRF3. Mediates polyubiquitination of CYP3A4. The chain is Ubiquitin-conjugating enzyme E2 D1 (UBE2D1) from Bos taurus (Bovine).